A 212-amino-acid chain; its full sequence is ATP-dependent Clp protease proteolytic subunit (212 aa).

Serine 106 acts as the Nucleophile in catalysis. Residue histidine 131 is part of the active site.

This sequence belongs to the peptidase S14 family. In terms of assembly, fourteen ClpP subunits assemble into 2 heptameric rings which stack back to back to give a disk-like structure with a central cavity, resembling the structure of eukaryotic proteasomes.

It localises to the cytoplasm. It carries out the reaction Hydrolysis of proteins to small peptides in the presence of ATP and magnesium. alpha-casein is the usual test substrate. In the absence of ATP, only oligopeptides shorter than five residues are hydrolyzed (such as succinyl-Leu-Tyr-|-NHMec, and Leu-Tyr-Leu-|-Tyr-Trp, in which cleavage of the -Tyr-|-Leu- and -Tyr-|-Trp bonds also occurs).. Cleaves peptides in various proteins in a process that requires ATP hydrolysis. Has a chymotrypsin-like activity. Plays a major role in the degradation of misfolded proteins. In Rhodopseudomonas palustris (strain ATCC BAA-98 / CGA009), this protein is ATP-dependent Clp protease proteolytic subunit.